The following is a 553-amino-acid chain: Solute carrier family 45 member 3 (553 aa).

The next 11 membrane-spanning stretches (helical) occupy residues 19–39, 52–72, 88–108, 120–140, 161–181, 198–218, 275–295, 323–343, 353–373, 382–402, and 522–542; these read LLINLLTFGLEVCLAAGITYV, FMTMVLGIGPVLGLVSVPLLG, FIWALSLGILLSLFLIPRAGW, LELALLILGVGLLDFCGQVCF, YSVYAFMISLGGCLGYLLPAI, CLFGLLTLIFLTCVAATLLVA, FVAELCSWMALMTFTLFYTDF, MGSLGLFLQCAISLVFSLVMD, AVYLASVAAFPVAAGATCLSH, AALTGFTFSALQILPYTLASL, and AYMVSAAGLGLVAIYFATQVV.

Belongs to the glycoside-pentoside-hexuronide (GPH) cation symporter transporter (TC 2.A.2) family.

The protein resides in the membrane. It catalyses the reaction sucrose(out) + H(+)(out) = sucrose(in) + H(+)(in). Its function is as follows. Proton-associated sucrose transporter. May be able to transport also glucose and fructose. The chain is Solute carrier family 45 member 3 (SLC45A3) from Macaca fascicularis (Crab-eating macaque).